A 311-amino-acid chain; its full sequence is Dermonecrotic toxin LlSicTox-alphaIII1i (311 aa).

An N-terminal signal peptide occupies residues Met-1–Thr-21. Residues Asp-22–Arg-26 constitute a propeptide that is removed on maturation. His-38 is an active-site residue. Residues Glu-58 and Asp-60 each coordinate Mg(2+). Catalysis depends on His-73, which acts as the Nucleophile. Cys-77 and Cys-83 are joined by a disulfide. Asp-117 contributes to the Mg(2+) binding site.

This sequence belongs to the arthropod phospholipase D family. Class I subfamily. It depends on Mg(2+) as a cofactor. As to expression, expressed by the venom gland.

The protein localises to the secreted. It carries out the reaction an N-(acyl)-sphingosylphosphocholine = an N-(acyl)-sphingosyl-1,3-cyclic phosphate + choline. It catalyses the reaction an N-(acyl)-sphingosylphosphoethanolamine = an N-(acyl)-sphingosyl-1,3-cyclic phosphate + ethanolamine. The enzyme catalyses a 1-acyl-sn-glycero-3-phosphocholine = a 1-acyl-sn-glycero-2,3-cyclic phosphate + choline. The catalysed reaction is a 1-acyl-sn-glycero-3-phosphoethanolamine = a 1-acyl-sn-glycero-2,3-cyclic phosphate + ethanolamine. Its function is as follows. Dermonecrotic toxins cleave the phosphodiester linkage between the phosphate and headgroup of certain phospholipids (sphingolipid and lysolipid substrates), forming an alcohol (often choline) and a cyclic phosphate. This toxin acts on sphingomyelin (SM) with high activity. It also act on acyl- and alkyl-lysophosphatidylcholine (LPC), but not on sphingosylphosphorylcholine (SPC) and phosphatidylcholine (PC). It may also act on ceramide phosphoethanolamine (CPE), and lysophosphatidylethanolamine (LPE), but not on lysophosphatidylserine (LPS), and lysophosphatidylglycerol (LPG). It acts by transphosphatidylation, releasing exclusively cyclic phosphate products as second products. Induces complement-dependent hemolysis and dermonecrosis. Also induces increased vascular permeability, edema, inflammatory response, and platelet aggregation. This Loxosceles laeta (South American recluse spider) protein is Dermonecrotic toxin LlSicTox-alphaIII1i.